The chain runs to 317 residues: uncharacterized protein (317 aa).

This is an uncharacterized protein from Borreliella burgdorferi (strain ATCC 35210 / DSM 4680 / CIP 102532 / B31) (Borrelia burgdorferi).